The following is a 476-amino-acid chain: Argininosuccinate lyase (476 aa).

Belongs to the lyase 1 family. Argininosuccinate lyase subfamily.

It localises to the cytoplasm. It carries out the reaction 2-(N(omega)-L-arginino)succinate = fumarate + L-arginine. It participates in amino-acid biosynthesis; L-arginine biosynthesis; L-arginine from L-ornithine and carbamoyl phosphate: step 3/3. This Leptothrix cholodnii (strain ATCC 51168 / LMG 8142 / SP-6) (Leptothrix discophora (strain SP-6)) protein is Argininosuccinate lyase.